Here is a 79-residue protein sequence, read N- to C-terminus: Small ribosomal subunit protein bS18 (79 aa).

The protein belongs to the bacterial ribosomal protein bS18 family. As to quaternary structure, part of the 30S ribosomal subunit. Forms a tight heterodimer with protein bS6.

Functionally, binds as a heterodimer with protein bS6 to the central domain of the 16S rRNA, where it helps stabilize the platform of the 30S subunit. This Bacillus licheniformis (strain ATCC 14580 / DSM 13 / JCM 2505 / CCUG 7422 / NBRC 12200 / NCIMB 9375 / NCTC 10341 / NRRL NRS-1264 / Gibson 46) protein is Small ribosomal subunit protein bS18.